The chain runs to 247 residues: Geranylgeranylglyceryl phosphate synthase (247 aa).

Mg(2+) contacts are provided by Asp-23 and Ser-52. Sn-glycerol 1-phosphate-binding positions include 171–177, 203–204, and 225–226; these read YLEAGSG, GG, and GT.

This sequence belongs to the GGGP/HepGP synthase family. Group II subfamily. It depends on Mg(2+) as a cofactor.

The protein resides in the cytoplasm. The enzyme catalyses sn-glycerol 1-phosphate + (2E,6E,10E)-geranylgeranyl diphosphate = sn-3-O-(geranylgeranyl)glycerol 1-phosphate + diphosphate. Its pathway is membrane lipid metabolism; glycerophospholipid metabolism. Its function is as follows. Prenyltransferase that catalyzes the transfer of the geranylgeranyl moiety of geranylgeranyl diphosphate (GGPP) to the C3 hydroxyl of sn-glycerol-1-phosphate (G1P). This reaction is the first ether-bond-formation step in the biosynthesis of archaeal membrane lipids. The polypeptide is Geranylgeranylglyceryl phosphate synthase (Methanosarcina mazei (strain ATCC BAA-159 / DSM 3647 / Goe1 / Go1 / JCM 11833 / OCM 88) (Methanosarcina frisia)).